A 701-amino-acid polypeptide reads, in one-letter code: DNA ligase (701 aa).

NAD(+)-binding positions include 58–62 (DYEYD), 107–108 (SL), and E138. Catalysis depends on K140, which acts as the N6-AMP-lysine intermediate. NAD(+) is bound by residues R161, E199, K323, and K347. Residues C441, C444, C459, and C464 each coordinate Zn(2+). Residues 621 to 701 (EKRGKLAGLN…EEFLKMIGQQ (81 aa)) form the BRCT domain.

It belongs to the NAD-dependent DNA ligase family. LigA subfamily. The cofactor is Mg(2+). Mn(2+) is required as a cofactor.

The enzyme catalyses NAD(+) + (deoxyribonucleotide)n-3'-hydroxyl + 5'-phospho-(deoxyribonucleotide)m = (deoxyribonucleotide)n+m + AMP + beta-nicotinamide D-nucleotide.. Its function is as follows. DNA ligase that catalyzes the formation of phosphodiester linkages between 5'-phosphoryl and 3'-hydroxyl groups in double-stranded DNA using NAD as a coenzyme and as the energy source for the reaction. It is essential for DNA replication and repair of damaged DNA. This Sulfurihydrogenibium azorense (strain DSM 15241 / OCM 825 / Az-Fu1) protein is DNA ligase.